The sequence spans 365 residues: tRNA 2-selenouridine synthase (365 aa).

One can recognise a Rhodanese domain in the interval 15–138 (FVNDHPIMDA…MRQFLIETID (124 aa)). The active-site S-selanylcysteine intermediate is the Cys-98.

The protein belongs to the SelU family. As to quaternary structure, monomer.

The catalysed reaction is 5-methylaminomethyl-2-thiouridine(34) in tRNA + selenophosphate + (2E)-geranyl diphosphate + H2O + H(+) = 5-methylaminomethyl-2-selenouridine(34) in tRNA + (2E)-thiogeraniol + phosphate + diphosphate. It catalyses the reaction 5-methylaminomethyl-2-thiouridine(34) in tRNA + (2E)-geranyl diphosphate = 5-methylaminomethyl-S-(2E)-geranyl-thiouridine(34) in tRNA + diphosphate. It carries out the reaction 5-methylaminomethyl-S-(2E)-geranyl-thiouridine(34) in tRNA + selenophosphate + H(+) = 5-methylaminomethyl-2-(Se-phospho)selenouridine(34) in tRNA + (2E)-thiogeraniol. The enzyme catalyses 5-methylaminomethyl-2-(Se-phospho)selenouridine(34) in tRNA + H2O = 5-methylaminomethyl-2-selenouridine(34) in tRNA + phosphate. Functionally, involved in the post-transcriptional modification of the uridine at the wobble position (U34) of tRNA(Lys), tRNA(Glu) and tRNA(Gln). Catalyzes the conversion of 2-thiouridine (S2U-RNA) to 2-selenouridine (Se2U-RNA). Acts in a two-step process involving geranylation of 2-thiouridine (S2U) to S-geranyl-2-thiouridine (geS2U) and subsequent selenation of the latter derivative to 2-selenouridine (Se2U) in the tRNA chain. The protein is tRNA 2-selenouridine synthase of Shewanella halifaxensis (strain HAW-EB4).